We begin with the raw amino-acid sequence, 156 residues long: tRNA (cytidine(34)-2'-O)-methyltransferase (156 aa).

Residues Gly100, Ile122, and Ser130 each contribute to the S-adenosyl-L-methionine site.

The protein belongs to the class IV-like SAM-binding methyltransferase superfamily. RNA methyltransferase TrmH family. TrmL subfamily. As to quaternary structure, homodimer.

Its subcellular location is the cytoplasm. The catalysed reaction is cytidine(34) in tRNA + S-adenosyl-L-methionine = 2'-O-methylcytidine(34) in tRNA + S-adenosyl-L-homocysteine + H(+). It catalyses the reaction 5-carboxymethylaminomethyluridine(34) in tRNA(Leu) + S-adenosyl-L-methionine = 5-carboxymethylaminomethyl-2'-O-methyluridine(34) in tRNA(Leu) + S-adenosyl-L-homocysteine + H(+). Methylates the ribose at the nucleotide 34 wobble position in the two leucyl isoacceptors tRNA(Leu)(CmAA) and tRNA(Leu)(cmnm5UmAA). Catalyzes the methyl transfer from S-adenosyl-L-methionine to the 2'-OH of the wobble nucleotide. The sequence is that of tRNA (cytidine(34)-2'-O)-methyltransferase from Aeromonas hydrophila subsp. hydrophila (strain ATCC 7966 / DSM 30187 / BCRC 13018 / CCUG 14551 / JCM 1027 / KCTC 2358 / NCIMB 9240 / NCTC 8049).